A 366-amino-acid polypeptide reads, in one-letter code: Spermidine/putrescine import ATP-binding protein PotA (366 aa).

One can recognise an ABC transporter domain in the interval Ile-8–Ile-239. An ATP-binding site is contributed by Gly-41–Thr-48.

Belongs to the ABC transporter superfamily. Spermidine/putrescine importer (TC 3.A.1.11.1) family. The complex is composed of two ATP-binding proteins (PotA), two transmembrane proteins (PotB and PotC) and a solute-binding protein (PotD).

The protein resides in the cell membrane. The catalysed reaction is ATP + H2O + polyamine-[polyamine-binding protein]Side 1 = ADP + phosphate + polyamineSide 2 + [polyamine-binding protein]Side 1.. Functionally, part of the ABC transporter complex PotABCD involved in spermidine/putrescine import. Responsible for energy coupling to the transport system. This chain is Spermidine/putrescine import ATP-binding protein PotA, found in Listeria monocytogenes serotype 4b (strain F2365).